The sequence spans 230 residues: Lipoprotein-releasing system ATP-binding protein LolD (230 aa).

In terms of domain architecture, ABC transporter spans 6–230 (LQASNLEKEY…GHFILPSETL (225 aa)). 42–49 (GSSGSGKS) is a binding site for ATP.

Belongs to the ABC transporter superfamily. Lipoprotein translocase (TC 3.A.1.125) family. The complex is composed of two ATP-binding proteins (LolD) and two transmembrane proteins (LolC and LolE).

Its subcellular location is the cell inner membrane. Its function is as follows. Part of the ABC transporter complex LolCDE involved in the translocation of mature outer membrane-directed lipoproteins, from the inner membrane to the periplasmic chaperone, LolA. Responsible for the formation of the LolA-lipoprotein complex in an ATP-dependent manner. In Hydrogenovibrio crunogenus (strain DSM 25203 / XCL-2) (Thiomicrospira crunogena), this protein is Lipoprotein-releasing system ATP-binding protein LolD.